A 234-amino-acid polypeptide reads, in one-letter code: Probable transcriptional regulatory protein Pfl01_3677 (234 aa).

The protein belongs to the TACO1 family.

Its subcellular location is the cytoplasm. In Pseudomonas fluorescens (strain Pf0-1), this protein is Probable transcriptional regulatory protein Pfl01_3677.